The chain runs to 224 residues: Large ribosomal subunit protein uL3 (224 aa).

Residues 132–153 (SQTKTHGTHEYQRHPGAIGQRK) are disordered.

Belongs to the universal ribosomal protein uL3 family. Part of the 50S ribosomal subunit. Forms a cluster with proteins L14 and L19.

Functionally, one of the primary rRNA binding proteins, it binds directly near the 3'-end of the 23S rRNA, where it nucleates assembly of the 50S subunit. This Myxococcus xanthus (strain DK1622) protein is Large ribosomal subunit protein uL3.